Here is a 275-residue protein sequence, read N- to C-terminus: Tryptophan synthase alpha chain (275 aa).

Catalysis depends on proton acceptor residues E49 and D60.

The protein belongs to the TrpA family. Tetramer of two alpha and two beta chains.

It catalyses the reaction (1S,2R)-1-C-(indol-3-yl)glycerol 3-phosphate + L-serine = D-glyceraldehyde 3-phosphate + L-tryptophan + H2O. It functions in the pathway amino-acid biosynthesis; L-tryptophan biosynthesis; L-tryptophan from chorismate: step 5/5. Functionally, the alpha subunit is responsible for the aldol cleavage of indoleglycerol phosphate to indole and glyceraldehyde 3-phosphate. The polypeptide is Tryptophan synthase alpha chain (Psychrobacter sp. (strain PRwf-1)).